The following is a 491-amino-acid chain: Mitochondrial MYO2 receptor-related protein 1 (491 aa).

At Thr12 the chain carries Phosphothreonine. 2 positions are modified to phosphoserine: Ser16 and Ser37. Positions Asn295–Glu384 form a coiled coil. Residues Asn300–Thr439 are interaction with MYO2. Positions Lys419–Lys491 are disordered. A compositionally biased stretch (polar residues) spans Ser461–Gly472.

Interacts with MYO2 and PCL7. Phosphorylated by the cyclin-CDK PCL7-PHO85.

The protein localises to the bud tip. The protein resides in the bud neck. It localises to the mitochondrion outer membrane. Its function is as follows. Involved in the guiding of mitochondrial tubules to the bud tip during cell division. The sequence is that of Mitochondrial MYO2 receptor-related protein 1 (MMR1) from Saccharomyces cerevisiae (strain ATCC 204508 / S288c) (Baker's yeast).